The chain runs to 401 residues: Lipid-A-disaccharide synthase (401 aa).

It belongs to the LpxB family.

It carries out the reaction a lipid X + a UDP-2-N,3-O-bis[(3R)-3-hydroxyacyl]-alpha-D-glucosamine = a lipid A disaccharide + UDP + H(+). Its pathway is bacterial outer membrane biogenesis; LPS lipid A biosynthesis. Condensation of UDP-2,3-diacylglucosamine and 2,3-diacylglucosamine-1-phosphate to form lipid A disaccharide, a precursor of lipid A, a phosphorylated glycolipid that anchors the lipopolysaccharide to the outer membrane of the cell. The protein is Lipid-A-disaccharide synthase of Ruegeria pomeroyi (strain ATCC 700808 / DSM 15171 / DSS-3) (Silicibacter pomeroyi).